The sequence spans 184 residues: Large ribosomal subunit protein uL5c (184 aa).

The protein belongs to the universal ribosomal protein uL5 family. As to quaternary structure, part of the 50S ribosomal subunit; contacts the 5S rRNA.

It localises to the plastid. It is found in the chloroplast. Binds 5S rRNA, forms part of the central protuberance of the 50S subunit. This is Large ribosomal subunit protein uL5c (rpl5) from Nephroselmis olivacea (Green alga).